The sequence spans 577 residues: Proline--tRNA ligase (577 aa).

The protein belongs to the class-II aminoacyl-tRNA synthetase family. ProS type 1 subfamily. As to quaternary structure, homodimer.

It is found in the cytoplasm. It carries out the reaction tRNA(Pro) + L-proline + ATP = L-prolyl-tRNA(Pro) + AMP + diphosphate. In terms of biological role, catalyzes the attachment of proline to tRNA(Pro) in a two-step reaction: proline is first activated by ATP to form Pro-AMP and then transferred to the acceptor end of tRNA(Pro). As ProRS can inadvertently accommodate and process non-cognate amino acids such as alanine and cysteine, to avoid such errors it has two additional distinct editing activities against alanine. One activity is designated as 'pretransfer' editing and involves the tRNA(Pro)-independent hydrolysis of activated Ala-AMP. The other activity is designated 'posttransfer' editing and involves deacylation of mischarged Ala-tRNA(Pro). The misacylated Cys-tRNA(Pro) is not edited by ProRS. The protein is Proline--tRNA ligase of Thermotoga maritima (strain ATCC 43589 / DSM 3109 / JCM 10099 / NBRC 100826 / MSB8).